Consider the following 62-residue polypeptide: Large ribosomal subunit protein bL33 (62 aa).

This sequence belongs to the bacterial ribosomal protein bL33 family.

The chain is Large ribosomal subunit protein bL33 from Bacteroides fragilis (strain ATCC 25285 / DSM 2151 / CCUG 4856 / JCM 11019 / LMG 10263 / NCTC 9343 / Onslow / VPI 2553 / EN-2).